Consider the following 671-residue polypeptide: UvrABC system protein C (671 aa).

The 80-residue stretch at 16 to 95 folds into the GIY-YIG domain; it reads VEPGVYRFRD…IKEFDPRFNV (80 aa). The 36-residue stretch at 208–243 folds into the UVR domain; sequence DRLARDMEREMNQAAQELNFERAARLRDNISALQRA. The tract at residues 645–671 is disordered; the sequence is SSAPSSGATEAVLPAMVENGVDDTPST.

This sequence belongs to the UvrC family. As to quaternary structure, interacts with UvrB in an incision complex.

Its subcellular location is the cytoplasm. Its function is as follows. The UvrABC repair system catalyzes the recognition and processing of DNA lesions. UvrC both incises the 5' and 3' sides of the lesion. The N-terminal half is responsible for the 3' incision and the C-terminal half is responsible for the 5' incision. This is UvrABC system protein C from Mycobacteroides abscessus (strain ATCC 19977 / DSM 44196 / CCUG 20993 / CIP 104536 / JCM 13569 / NCTC 13031 / TMC 1543 / L948) (Mycobacterium abscessus).